The following is a 263-amino-acid chain: Syntaxin-73 (263 aa).

Topologically, residues 1 to 240 (MGVIDLITRV…TVTKLRSSRN (240 aa)) are cytoplasmic. S12 carries the post-translational modification Phosphoserine. One can recognise a t-SNARE coiled-coil homology domain in the interval 169–231 (YEMKRIKQAR…KSTNVRLKDT (63 aa)). Residues 241–261 (FCIDIILLCILLGIAAFIYNS) form a helical; Anchor for type IV membrane protein membrane-spanning segment. Residues 262–263 (VK) are Vesicular-facing.

It belongs to the syntaxin family. Part of the t-SNARE complex. In terms of tissue distribution, expressed in root, leaf, stem, flower and silique.

The protein resides in the membrane. In terms of biological role, vesicle trafficking protein that functions in the secretory pathway. The polypeptide is Syntaxin-73 (SYP73) (Arabidopsis thaliana (Mouse-ear cress)).